Consider the following 471-residue polypeptide: uncharacterized protein (471 aa).

Transmembrane regions (helical) follow at residues 48 to 68 (FISAALMLLNNTILCISFTIV), 85 to 105 (LSGVIIGLPTITALVLLYPML), 123 to 140 (YTMSCISCIIGHIMYALA), 145 to 165 (SVALILVSRIFTGVACTMFLY), 186 to 206 (VVNSVMATLGLTAGPFIGGLM), 223 to 243 (SGNWLMAFIWVGLFLFGFACF), 277 to 297 (FVGCLVIFVVAFSGFSAYFLL), 320 to 340 (GNFLSLAGIINVPLLLIFSYL), 349 to 369 (IILLGCCLNIVCMVIHITIHY), 379 to 399 (FIIYTLVFFGSSIANSPSVSL), 414 to 434 (VAVQISISLSDTVGAIFGGAF), and 440 to 460 (VVFFAVCLILNVMSVLALLII).

Belongs to the major facilitator superfamily.

The protein resides in the golgi apparatus. It localises to the membrane. This is an uncharacterized protein from Schizosaccharomyces pombe (strain 972 / ATCC 24843) (Fission yeast).